We begin with the raw amino-acid sequence, 585 residues long: MRYSHTLQQFSILSFFVTIWTVQSVPPQPPIRCDQTGCTVSNAYGTWPDRKTCHAANVTYPTTEEDLRKAVAYAAEHNLKVKTVTKFSHTIPKLACPSGSDALLISTSKYNSVIEIEPELLTVTADSGVSLRELIEKVEGAGFSIGTSPYWEGVSIGGLISTGSHGSSWSGRGGSVHDHVVGISLVVPANQSEGFAKVVRLEEGRDDTLLNAVKVSLGVLGVISKVKLSIEKAFKRSVTYNFTSDVALEDIFMEHGKKYEFGDITWYPSRKTAVYRYDIRAPVNVSGNGVNDFLGFQSNPILISKGVRALEKGFESSKNENGKCTTADTTLAYKKLIGNGLKNSGLIFTGYPVIGRQGKIQTSGSCLYSSSIRIDVACAWDPRYNGLFFYETTAIFPVSRFRDFLLDVKKLRDMKPERLCGIDIYNGIFIRFIKGSKAYLGQTEDSVVIDFNYYRADDELTPRLNQDVMEEMEQMAFVKHGAKPHWGKNRKVGFFGVKQKIGPNFDKFLEVKNKLDPKKMFSSEWSDEILLGTEASKYDGCALEGNCVCSEERHCNPSKGYFCKEGLVYTQARVCRFSPAQVIVM.

The signal sequence occupies residues 1–24; that stretch reads MRYSHTLQQFSILSFFVTIWTVQS. The region spanning 51 to 233 is the FAD-binding PCMH-type domain; it reads KTCHAANVTY…SKVKLSIEKA (183 aa).

The protein belongs to the oxygen-dependent FAD-linked oxidoreductase family. FAD is required as a cofactor.

The protein resides in the vacuole. It carries out the reaction L-gulono-1,4-lactone + O2 = L-ascorbate + H2O2 + H(+). Its pathway is cofactor biosynthesis; L-ascorbate biosynthesis. Functionally, catalyzes the oxidation of L-gulono-1,4-lactone to ascorbic acid. L-gulono-1,4-lactone is oxidized to hydrogen peroxide and L-xylo-hexulonolactone which spontaneously isomerizes to L-ascorbate. In Arabidopsis thaliana (Mouse-ear cress), this protein is L-gulonolactone oxidase 3.